A 658-amino-acid polypeptide reads, in one-letter code: MFRKTLNSISRRHFSSSSPESPSLYSFLKPSLFSHKPITLSPSLSPPQNPKTLTPDQKSSFESTLHDSLNAHYTDEAWKAFRSLTAASSLPEKRLINSLITHLSGVEGSGESISHRLKRAFASAAYVIEKDPILLEFETVRTLLESMKLAKAAGPALALVKCMFKNRYFVPFDLWGHLVIDICRENGSLAPFLKVFKESCRISVDEKLEFMKPDLVASNAALEACCRQMESLADAENVIESMAVLGVKPDELSFGFLAYLYARKGLREKISELENLMDGFGFASRRILYSNMISGYVKSGDLDSVSDVILHSLKEGGEESSFSVETYCELVKGFIESKSVKSLAKVILEAQKLESSYVGVDSSVGFGIINACVNLGFSDKAHSILEEMIAQGGGSVGIGVYVPILKAYCKEYRTAEATQLVTEISSSGLQLDVEISNALIEASMTNQDFISAFTLFRDMRENRVVDLKGSYLTIMTGLLENQRPELMAAFLDEVVEDPRVEVNSHDWNSIIHAFCKSGRLEDARRTFRRMVFLRYEPNNQTYLSLINGYVSGEKYFNVLLLWNEIKGKISSVEAEKRSRLDHALVDAFLYALVKGGFFDAAMQVVEKSQEMKIFVDKWRYKQAFMETHKKLRLPKLRKRNYKKMESLVAFKNWAGLNT.

Disordered regions lie at residues 1–23 (MFRK…ESPS) and 39–61 (TLSP…KSSF). Polar residues predominate over residues 50–61 (PKTLTPDQKSSF). PPR repeat units follow at residues 214–249 (DLVA…GVKP), 250–284 (DELS…GFAS), 285–320 (RRIL…GEES), 323–353 (SVET…AQKL), 361–395 (DSSV…GGGS), 397–431 (GIGV…GLQL), 432–466 (DVEI…RVVD), 467–497 (LKGS…VVED), 503–537 (NSHD…RYEP), 538–568 (NNQT…IKGK), and 581–615 (DHAL…KIFV).

The protein belongs to the PPR family. P subfamily.

The chain is Pentatricopeptide repeat-containing protein At1g69290 from Arabidopsis thaliana (Mouse-ear cress).